The primary structure comprises 372 residues: 4-hydroxy-3-methylbut-2-en-1-yl diphosphate synthase (flavodoxin) (372 aa).

[4Fe-4S] cluster-binding residues include C270, C273, C305, and E312.

It belongs to the IspG family. It depends on [4Fe-4S] cluster as a cofactor.

It carries out the reaction (2E)-4-hydroxy-3-methylbut-2-enyl diphosphate + oxidized [flavodoxin] + H2O + 2 H(+) = 2-C-methyl-D-erythritol 2,4-cyclic diphosphate + reduced [flavodoxin]. Its pathway is isoprenoid biosynthesis; isopentenyl diphosphate biosynthesis via DXP pathway; isopentenyl diphosphate from 1-deoxy-D-xylulose 5-phosphate: step 5/6. Functionally, converts 2C-methyl-D-erythritol 2,4-cyclodiphosphate (ME-2,4cPP) into 1-hydroxy-2-methyl-2-(E)-butenyl 4-diphosphate. The chain is 4-hydroxy-3-methylbut-2-en-1-yl diphosphate synthase (flavodoxin) from Salmonella schwarzengrund (strain CVM19633).